The following is a 394-amino-acid chain: Protein maelstrom (394 aa).

The HMG box DNA-binding region spans 2 to 69; that stretch reads APKKQNGFMM…ARRDKRGSLN (68 aa). Residues 44 to 93 are disordered; the sequence is TQQRGPYNSDAKDANAARRDKRGSLNGHGQVDKAQREAAESLMDKAQREA. A compositionally biased stretch (basic and acidic residues) spans 73-93; it reads QVDKAQREAAESLMDKAQREA.

It belongs to the maelstrom family.

The protein localises to the cytoplasm. It is found in the nucleus. Functionally, involved both in the piRNA and miRNA metabolic processes. As a component of the meiotic nuage, plays a central role during oogenesis by repressing transposable elements and preventing their mobilization, which is essential for the germline integrity. Repression of transposable elements is mediated via the piRNA metabolic process, which mediates the repression of transposable elements during meiosis by forming complexes composed of piRNAs and Piwi proteins and governs the repression of transposons. As a nuclear component, it is required for proper differentiation in the germline stem cell (GSC) lineage by repressing microRNA-7 (miR-7), thereby acting as an indirect regulator of bag-of-marbles (Bam). Acts by binding to the promoter of miR-7 gene and repressing its expression; miR-7 repression alleviates the Bam repression by miR-7, thereby allowing differentiation in the germline stem cell (GSC) lineage. The sequence is that of Protein maelstrom (mael) from Drosophila sechellia (Fruit fly).